The chain runs to 253 residues: uncharacterized protein (253 aa).

Ser145 lines the substrate pocket. Tyr159 functions as the Proton acceptor in the catalytic mechanism.

Belongs to the short-chain dehydrogenases/reductases (SDR) family.

This is an uncharacterized protein from Mycobacterium tuberculosis (strain CDC 1551 / Oshkosh).